The sequence spans 381 residues: Chaperone protein DnaJ (381 aa).

In terms of domain architecture, J spans 5–70; sequence DFYEVLGVGR…QKKAAYDQYG (66 aa). A CR-type zinc finger spans residues 136–214; sequence GVSKEIEVPT…CHGQGRKQKT (79 aa). Residues cysteine 149, cysteine 152, cysteine 166, cysteine 169, cysteine 188, cysteine 191, cysteine 202, and cysteine 205 each contribute to the Zn(2+) site. CXXCXGXG motif repeat units follow at residues 149-156, 166-173, 188-195, and 202-209; these read CDTCDGSG, CGTCHGHG, CPTCHGKG, and CNECHGQG.

It belongs to the DnaJ family. As to quaternary structure, homodimer. It depends on Zn(2+) as a cofactor.

Its subcellular location is the cytoplasm. Functionally, participates actively in the response to hyperosmotic and heat shock by preventing the aggregation of stress-denatured proteins and by disaggregating proteins, also in an autonomous, DnaK-independent fashion. Unfolded proteins bind initially to DnaJ; upon interaction with the DnaJ-bound protein, DnaK hydrolyzes its bound ATP, resulting in the formation of a stable complex. GrpE releases ADP from DnaK; ATP binding to DnaK triggers the release of the substrate protein, thus completing the reaction cycle. Several rounds of ATP-dependent interactions between DnaJ, DnaK and GrpE are required for fully efficient folding. Also involved, together with DnaK and GrpE, in the DNA replication of plasmids through activation of initiation proteins. In Vibrio campbellii (strain ATCC BAA-1116), this protein is Chaperone protein DnaJ.